Here is a 459-residue protein sequence, read N- to C-terminus: Bifunctional protein GlmU (459 aa).

Residues 1-230 form a pyrophosphorylase region; sequence MSNRFAVILA…FDETLGVNDR (230 aa). Residues 9–12, Lys-23, Gln-73, and 78–79 contribute to the UDP-N-acetyl-alpha-D-glucosamine site; these read LAAG and GT. Position 103 (Asp-103) interacts with Mg(2+). Residues Gly-140, Glu-155, Asn-170, and Asn-228 each contribute to the UDP-N-acetyl-alpha-D-glucosamine site. Residue Asn-228 coordinates Mg(2+). The tract at residues 231–251 is linker; the sequence is VALSQAEIIMKNRINRKNMVN. An N-acetyltransferase region spans residues 252 to 459; that stretch reads GVTIIDPSNT…VDQLLNKKKS (208 aa). Arg-333 and Lys-351 together coordinate UDP-N-acetyl-alpha-D-glucosamine. The Proton acceptor role is filled by His-363. Positions 366 and 377 each coordinate UDP-N-acetyl-alpha-D-glucosamine. Residues 386–387, Ala-423, and Arg-440 each bind acetyl-CoA; that span reads NY.

It in the N-terminal section; belongs to the N-acetylglucosamine-1-phosphate uridyltransferase family. The protein in the C-terminal section; belongs to the transferase hexapeptide repeat family. In terms of assembly, homotrimer. Mg(2+) is required as a cofactor.

The protein localises to the cytoplasm. It catalyses the reaction alpha-D-glucosamine 1-phosphate + acetyl-CoA = N-acetyl-alpha-D-glucosamine 1-phosphate + CoA + H(+). The catalysed reaction is N-acetyl-alpha-D-glucosamine 1-phosphate + UTP + H(+) = UDP-N-acetyl-alpha-D-glucosamine + diphosphate. It participates in nucleotide-sugar biosynthesis; UDP-N-acetyl-alpha-D-glucosamine biosynthesis; N-acetyl-alpha-D-glucosamine 1-phosphate from alpha-D-glucosamine 6-phosphate (route II): step 2/2. The protein operates within nucleotide-sugar biosynthesis; UDP-N-acetyl-alpha-D-glucosamine biosynthesis; UDP-N-acetyl-alpha-D-glucosamine from N-acetyl-alpha-D-glucosamine 1-phosphate: step 1/1. It functions in the pathway bacterial outer membrane biogenesis; LPS lipid A biosynthesis. Functionally, catalyzes the last two sequential reactions in the de novo biosynthetic pathway for UDP-N-acetylglucosamine (UDP-GlcNAc). The C-terminal domain catalyzes the transfer of acetyl group from acetyl coenzyme A to glucosamine-1-phosphate (GlcN-1-P) to produce N-acetylglucosamine-1-phosphate (GlcNAc-1-P), which is converted into UDP-GlcNAc by the transfer of uridine 5-monophosphate (from uridine 5-triphosphate), a reaction catalyzed by the N-terminal domain. The chain is Bifunctional protein GlmU from Bacillus mycoides (strain KBAB4) (Bacillus weihenstephanensis).